A 387-amino-acid chain; its full sequence is Phosphoglycerate kinase (387 aa).

Substrate contacts are provided by residues 21–23, R36, and 59–62; these read DLN and HLGR. An N6-acetyllysine modification is found at K84. Residues R113 and R146 each contribute to the substrate site. ATP contacts are provided by residues K197, E314, and 340–343; that span reads GGDT.

Belongs to the phosphoglycerate kinase family. Monomer.

The protein resides in the cytoplasm. It carries out the reaction (2R)-3-phosphoglycerate + ATP = (2R)-3-phospho-glyceroyl phosphate + ADP. It functions in the pathway carbohydrate degradation; glycolysis; pyruvate from D-glyceraldehyde 3-phosphate: step 2/5. The chain is Phosphoglycerate kinase from Escherichia coli O139:H28 (strain E24377A / ETEC).